We begin with the raw amino-acid sequence, 180 residues long: uncharacterized protein (180 aa).

Belongs to the CdaR family.

This is an uncharacterized protein from Thermomonospora curvata.